The primary structure comprises 500 residues: Cytochrome P450 monooxygenase ausR (500 aa).

The chain crosses the membrane as a helical span at residues 15–35 (GVGLYILWTVAVLFVIFKLLA). Cys439 contacts heme.

It belongs to the cytochrome P450 family. Requires heme as cofactor.

Its subcellular location is the membrane. The protein operates within secondary metabolite biosynthesis; terpenoid biosynthesis. Functionally, cytochrome P450 monooxygenase; part of the gene cluster that mediates the biosynthesis of calidodehydroaustin, a fungal meroterpenoid. The first step of the pathway is the synthesis of 3,5-dimethylorsellinic acid by the polyketide synthase ausA. 3,5-dimethylorsellinic acid is then prenylated by the polyprenyl transferase ausN. Further epoxidation by the FAD-dependent monooxygenase ausM and cyclization by the probable terpene cyclase ausL lead to the formation of protoaustinoid A. Protoaustinoid A is then oxidized to spiro-lactone preaustinoid A3 by the combined action of the FAD-binding monooxygenases ausB and ausC, and the dioxygenase ausE. Acid-catalyzed keto-rearrangement and ring contraction of the tetraketide portion of preaustinoid A3 by ausJ lead to the formation of preaustinoid A4. The aldo-keto reductase ausK, with the help of ausH, is involved in the next step by transforming preaustinoid A4 into isoaustinone which is in turn hydroxylated by the P450 monooxygenase ausI to form austinolide. The cytochrome P450 monooxygenase ausG modifies austinolide to austinol. Austinol is further acetylated to austin by the O-acetyltransferase ausP, which spontaneously changes to dehydroaustin. The cytochrome P450 monooxygenase ausR then converts dehydroaustin is into 7-dehydrodehydroaustin. The hydroxylation catalyzed by ausR permits the O-acetyltransferase ausQ to add an additional acetyl group to the molecule, leading to the formation of acetoxydehydroaustin. The short chain dehydrogenase ausT catalyzes the reduction of the double bond present between carbon atoms 1 and 2 to convert 7-dehydrodehydroaustin into 1,2-dihydro-7-hydroxydehydroaustin. AusQ catalyzes not only an acetylation reaction but also the addition of the PKS ausV diketide product to 1,2-dihydro-7-hydroxydehydroaustin, forming precalidodehydroaustin. Finally, the iron/alpha-ketoglutarate-dependent dioxygenase converts precalidodehydroaustin into calidodehydroaustin. The polypeptide is Cytochrome P450 monooxygenase ausR (Aspergillus calidoustus).